Here is a 100-residue protein sequence, read N- to C-terminus: Urease subunit gamma (100 aa).

Belongs to the urease gamma subunit family. Heterotrimer of UreA (gamma), UreB (beta) and UreC (alpha) subunits. Three heterotrimers associate to form the active enzyme.

The protein resides in the cytoplasm. It catalyses the reaction urea + 2 H2O + H(+) = hydrogencarbonate + 2 NH4(+). The protein operates within nitrogen metabolism; urea degradation; CO(2) and NH(3) from urea (urease route): step 1/1. The polypeptide is Urease subunit gamma (Pseudomonas syringae pv. tomato (strain ATCC BAA-871 / DC3000)).